Consider the following 500-residue polypeptide: Galactofuranose transporter ATP-binding protein YtfR (500 aa).

2 consecutive ABC transporter domains span residues 10 to 245 (LRTE…LGRE) and 259 to 497 (LSDK…IMNA). 42 to 49 (GENGAGKS) contributes to the ATP binding site.

Belongs to the ABC transporter superfamily. As to quaternary structure, the complex is composed of two ATP-binding proteins (YtfR), two transmembrane proteins (YtfT and YjfF) and a solute-binding protein (YtfQ).

Its subcellular location is the cell inner membrane. It carries out the reaction D-galactofuranose(out) + ATP + H2O = D-galactofuranose(in) + ADP + phosphate + H(+). Its function is as follows. Part of the ABC transporter complex YtfQRT-YjfF involved in galactofuranose transport. Responsible for energy coupling to the transport system. In Escherichia coli (strain K12), this protein is Galactofuranose transporter ATP-binding protein YtfR (ytfR).